Reading from the N-terminus, the 337-residue chain is Phytanoyl-CoA dioxygenase, peroxisomal (337 aa).

A peroxisome-targeting transit peptide spans M1–T30. K59 and K108 each carry N6-succinyllysine. 2-oxoglutarate contacts are provided by residues K120, M157, H175–D177, and W193. Fe cation contacts are provided by H175 and D177. An N6-succinyllysine modification is found at K252. Position 264 (H264) interacts with Fe cation. 2-oxoglutarate is bound by residues S266 and R275.

It belongs to the PhyH family. Interacts with FKBP52 and PHYHIP. It depends on Fe cation as a cofactor. L-ascorbate is required as a cofactor. The cofactor is ATP. Mg(2+) serves as cofactor.

It is found in the peroxisome. It catalyses the reaction phytanoyl-CoA + 2-oxoglutarate + O2 = 2-hydroxyphytanoyl-CoA + succinate + CO2. The catalysed reaction is 3-methylhexadecanoyl-CoA + 2-oxoglutarate + O2 = 2-hydroxy-3-methylhexadecanoyl-CoA + succinate + CO2. The enzyme catalyses hexadecanoyl-CoA + 2-oxoglutarate + O2 = 2-hydroxyhexadecanoyl-CoA + succinate + CO2. It carries out the reaction octanoyl-CoA + 2-oxoglutarate + O2 = 2-hydroxyoctanoyl-CoA + succinate + CO2. It catalyses the reaction decanoyl-CoA + 2-oxoglutarate + O2 = 2-hydroxydecanoyl-CoA + succinate + CO2. The catalysed reaction is 3-methylbutanoyl-CoA + 2-oxoglutarate + O2 = 2-hydroxy-3-methylbutanoyl-CoA + succinate + CO2. The enzyme catalyses heptadecanoyl-CoA + 2-oxoglutarate + O2 = 2-hydroxyheptadecanoyl-CoA + succinate + CO2. It carries out the reaction eicosanoyl-CoA + 2-oxoglutarate + O2 = 2-hydroxyeicosanoyl-CoA + succinate + CO2. It catalyses the reaction octadecanoyl-CoA + 2-oxoglutarate + O2 = 2-hydroxyoctadecanoyl-CoA + succinate + CO2. The catalysed reaction is dodecanoyl-CoA + 2-oxoglutarate + O2 = 2-hydroxydodecanoyl-CoA + succinate + CO2. The enzyme catalyses tetradecanoyl-CoA + 2-oxoglutarate + O2 = 2-hydroxytetradecanoyl-CoA + succinate + CO2. It carries out the reaction hexanoyl-CoA + 2-oxoglutarate + O2 = 2-hydroxyhexanoyl-CoA + succinate + CO2. It catalyses the reaction butanoyl-CoA + 2-oxoglutarate + O2 = 2-hydroxybutanoyl-CoA + succinate + CO2. The catalysed reaction is 3-methylnonanoyl-CoA + 2-oxoglutarate + O2 = 2-hydroxy-3-methylnonanoyl-CoA + succinate + CO2. The enzyme catalyses 3-methylundecanoyl-CoA + 2-oxoglutarate + O2 = 2-hydroxy-3-methylundecanoyl-CoA + succinate + CO2. It carries out the reaction 3-methyldodecanoyl-CoA + 2-oxoglutarate + O2 = 2-hydroxy-3-methyldodecanoyl-CoA + succinate + CO2. It functions in the pathway lipid metabolism; fatty acid metabolism. Catalyzes the 2-hydroxylation of not only racemic phytanoyl-CoA and the isomers of 3-methylhexadecanoyl-CoA, but also a variety of other mono- branched 3-methylacyl-CoA esters (with a chain length of at least seven carbon atoms) and straight-chain acyl-CoA esters (with a chain length longer than four carbon atoms). Does not hydroxylate long and very long straight chain acyl-CoAs or 2-methyl-and 4-methyl-branched acyl-CoAs. In Bos taurus (Bovine), this protein is Phytanoyl-CoA dioxygenase, peroxisomal (PHYH).